The primary structure comprises 428 residues: Glucose-1-phosphate adenylyltransferase (428 aa).

Alpha-D-glucose 1-phosphate-binding positions include Tyr114, Gly179, 194-195, and Ser212; that span reads EK.

This sequence belongs to the bacterial/plant glucose-1-phosphate adenylyltransferase family. As to quaternary structure, homotetramer.

The catalysed reaction is alpha-D-glucose 1-phosphate + ATP + H(+) = ADP-alpha-D-glucose + diphosphate. Its pathway is glycan biosynthesis; glycogen biosynthesis. Its function is as follows. Involved in the biosynthesis of ADP-glucose, a building block required for the elongation reactions to produce glycogen. Catalyzes the reaction between ATP and alpha-D-glucose 1-phosphate (G1P) to produce pyrophosphate and ADP-Glc. The sequence is that of Glucose-1-phosphate adenylyltransferase from Yersinia pseudotuberculosis serotype O:1b (strain IP 31758).